The chain runs to 145 residues: 3-dehydroquinate dehydratase (145 aa).

Tyr-24 acts as the Proton acceptor in catalysis. Residues Asn-75, His-81, and Asp-88 each coordinate substrate. The active-site Proton donor is the His-101. Substrate is bound by residues 102–103 (IS) and Arg-112.

This sequence belongs to the type-II 3-dehydroquinase family. Homododecamer.

It carries out the reaction 3-dehydroquinate = 3-dehydroshikimate + H2O. The protein operates within metabolic intermediate biosynthesis; chorismate biosynthesis; chorismate from D-erythrose 4-phosphate and phosphoenolpyruvate: step 3/7. Catalyzes a trans-dehydration via an enolate intermediate. This Corynebacterium glutamicum (strain R) protein is 3-dehydroquinate dehydratase.